A 205-amino-acid polypeptide reads, in one-letter code: Guanylate kinase (205 aa).

Residues 18–196 (PKLFIISAPA…AYQVLRSIFI (179 aa)) form the Guanylate kinase-like domain. 25 to 32 (APAGAGKT) contacts ATP.

Belongs to the guanylate kinase family.

It is found in the cytoplasm. The catalysed reaction is GMP + ATP = GDP + ADP. Essential for recycling GMP and indirectly, cGMP. This Chlamydia trachomatis serovar D (strain ATCC VR-885 / DSM 19411 / UW-3/Cx) protein is Guanylate kinase (gmk).